The primary structure comprises 242 residues: Probable septum site-determining protein MinC (242 aa).

The segment covering 120 to 135 has biased composition (basic and acidic residues); the sequence is APKKVEEKPAEPEHKP. Residues 120-144 are disordered; sequence APKKVEEKPAEPEHKPSRIVTSPVR.

The protein belongs to the MinC family. Interacts with MinD and FtsZ.

Cell division inhibitor that blocks the formation of polar Z ring septums. Rapidly oscillates between the poles of the cell to destabilize FtsZ filaments that have formed before they mature into polar Z rings. Prevents FtsZ polymerization. In Ectopseudomonas mendocina (strain ymp) (Pseudomonas mendocina), this protein is Probable septum site-determining protein MinC.